Consider the following 246-residue polypeptide: Phycocyanobilin:ferredoxin oxidoreductase (246 aa).

This sequence belongs to the HY2 family.

The enzyme catalyses (2R,3Z)-phycocyanobilin + 4 oxidized [2Fe-2S]-[ferredoxin] = biliverdin IXalpha + 4 reduced [2Fe-2S]-[ferredoxin] + 4 H(+). Catalyzes the four-electron reduction of biliverdin IX-alpha (2-electron reduction at both the A and D rings); the reaction proceeds via an isolatable 2-electron intermediate, 181,182-dihydrobiliverdin. This is Phycocyanobilin:ferredoxin oxidoreductase from Crocosphaera subtropica (strain ATCC 51142 / BH68) (Cyanothece sp. (strain ATCC 51142)).